The primary structure comprises 364 residues: Aminomethyltransferase (364 aa).

This sequence belongs to the GcvT family. In terms of assembly, the glycine cleavage system is composed of four proteins: P, T, L and H.

The enzyme catalyses N(6)-[(R)-S(8)-aminomethyldihydrolipoyl]-L-lysyl-[protein] + (6S)-5,6,7,8-tetrahydrofolate = N(6)-[(R)-dihydrolipoyl]-L-lysyl-[protein] + (6R)-5,10-methylene-5,6,7,8-tetrahydrofolate + NH4(+). Functionally, the glycine cleavage system catalyzes the degradation of glycine. This Desulforamulus reducens (strain ATCC BAA-1160 / DSM 100696 / MI-1) (Desulfotomaculum reducens) protein is Aminomethyltransferase.